Consider the following 201-residue polypeptide: Holliday junction branch migration complex subunit RuvA (201 aa).

The interval 1–64 (MIGRLRGTLA…EDAHLLYGFA (64 aa)) is domain I. The segment at 65 to 143 (EKRERELFRE…AWENMPTIAP (79 aa)) is domain II. A flexible linker region spans residues 144–152 (LVMEPRASA). The interval 153 to 201 (TVSSAEADAVSALIALGFKPQEASRAVAAVPGEDLSSEEMIRQALKGMV) is domain III.

This sequence belongs to the RuvA family. As to quaternary structure, homotetramer. Forms an RuvA(8)-RuvB(12)-Holliday junction (HJ) complex. HJ DNA is sandwiched between 2 RuvA tetramers; dsDNA enters through RuvA and exits via RuvB. An RuvB hexamer assembles on each DNA strand where it exits the tetramer. Each RuvB hexamer is contacted by two RuvA subunits (via domain III) on 2 adjacent RuvB subunits; this complex drives branch migration. In the full resolvosome a probable DNA-RuvA(4)-RuvB(12)-RuvC(2) complex forms which resolves the HJ.

Its subcellular location is the cytoplasm. In terms of biological role, the RuvA-RuvB-RuvC complex processes Holliday junction (HJ) DNA during genetic recombination and DNA repair, while the RuvA-RuvB complex plays an important role in the rescue of blocked DNA replication forks via replication fork reversal (RFR). RuvA specifically binds to HJ cruciform DNA, conferring on it an open structure. The RuvB hexamer acts as an ATP-dependent pump, pulling dsDNA into and through the RuvAB complex. HJ branch migration allows RuvC to scan DNA until it finds its consensus sequence, where it cleaves and resolves the cruciform DNA. The polypeptide is Holliday junction branch migration complex subunit RuvA (Pseudomonas aeruginosa (strain LESB58)).